The following is a 148-amino-acid chain: UPF0756 membrane protein NMCC_1816 (148 aa).

Helical transmembrane passes span 13–35, 50–70, 80–100, and 121–141; these read LILL…LLLM, HGLN…LVSG, FLNF…WLAG, and VIGV…AGIL.

It belongs to the UPF0756 family.

Its subcellular location is the cell membrane. This Neisseria meningitidis serogroup C (strain 053442) protein is UPF0756 membrane protein NMCC_1816.